A 144-amino-acid polypeptide reads, in one-letter code: Large ribosomal subunit protein uL15 (144 aa).

The interval 1 to 53 is disordered; that stretch reads MRLNTLSPAEGAKHNAKRLGRGIGSGLGKTSGRGHKGQKARTGGGVRRGFEGG. Residues 21–31 show a composition bias toward gly residues; sequence RGIGSGLGKTS.

It belongs to the universal ribosomal protein uL15 family. As to quaternary structure, part of the 50S ribosomal subunit.

In terms of biological role, binds to the 23S rRNA. In Histophilus somni (strain 129Pt) (Haemophilus somnus), this protein is Large ribosomal subunit protein uL15.